Reading from the N-terminus, the 89-residue chain is DNA-directed RNA polymerase subunit omega (89 aa).

Belongs to the RNA polymerase subunit omega family. As to quaternary structure, the RNAP catalytic core consists of 2 alpha, 1 beta, 1 beta' and 1 omega subunit. When a sigma factor is associated with the core the holoenzyme is formed, which can initiate transcription.

The enzyme catalyses RNA(n) + a ribonucleoside 5'-triphosphate = RNA(n+1) + diphosphate. Functionally, promotes RNA polymerase assembly. Latches the N- and C-terminal regions of the beta' subunit thereby facilitating its interaction with the beta and alpha subunits. The sequence is that of DNA-directed RNA polymerase subunit omega from Clavibacter michiganensis subsp. michiganensis (strain NCPPB 382).